The sequence spans 294 residues: MPWIQIKLNATAENAEAIGDMLMEETGALSATFLDAQDTPVFEPMPGETRLWGDTDVIGLYDAEADMDFVLNMLKNSPLIAEDFAYKIEQLEDKDWEREWMVNFHPMRFGRRLWICPSWREAPEPNAVNVLLDPGLAFGTGTHPTTSLCLEWLDGQDLVGKTIIDFGCGSGILAIAALKLGAEKVIGIDIDPQAIQASRDNAERNGVSDKLALFLPQDQPTDVQADVVVANILAGPLRELSPVIKSLVKPGGKLAISGVLEIQAEDVSTYYSDELALDPVVARDEWCRISGYKA.

S-adenosyl-L-methionine is bound by residues Thr-146, Gly-167, Asp-189, and Asn-231.

This sequence belongs to the methyltransferase superfamily. PrmA family.

Its subcellular location is the cytoplasm. It catalyses the reaction L-lysyl-[protein] + 3 S-adenosyl-L-methionine = N(6),N(6),N(6)-trimethyl-L-lysyl-[protein] + 3 S-adenosyl-L-homocysteine + 3 H(+). Functionally, methylates ribosomal protein L11. The protein is Ribosomal protein L11 methyltransferase of Photobacterium profundum (strain SS9).